Consider the following 255-residue polypeptide: MKFGIISIFPEMFKAINDFGITARAIKDSKVSIKCFNPRDYTTDKHATVDDTSFGGGAGMVMKYEPLSQAIKDAKSTLGYNTKVVYLSPQGSVFNHNKALELLENDSLILLCGRYEGVDERLIQDYVDEEISVGDFVLSGGELPAMLVMDSLIRLLPEVLGNKDSMIEDSFYDGLLDYPHYTKPAVLPDGNAVPSVLLSGNHKEIAKWRRKQKLIRTYERRKDLIECLCLSEEDKRIINDYKIDKVSTKGEKNEK.

S-adenosyl-L-methionine contacts are provided by residues Gly113 and 133-138 (VGDFVL).

This sequence belongs to the RNA methyltransferase TrmD family. As to quaternary structure, homodimer.

The protein localises to the cytoplasm. The catalysed reaction is guanosine(37) in tRNA + S-adenosyl-L-methionine = N(1)-methylguanosine(37) in tRNA + S-adenosyl-L-homocysteine + H(+). Its function is as follows. Specifically methylates guanosine-37 in various tRNAs. The chain is tRNA (guanine-N(1)-)-methyltransferase from Francisella philomiragia subsp. philomiragia (strain ATCC 25017 / CCUG 19701 / FSC 153 / O#319-036).